Reading from the N-terminus, the 753-residue chain is 5-methyltetrahydropteroyltriglutamate--homocysteine methyltransferase (753 aa).

5-methyltetrahydropteroyltri-L-glutamate is bound by residues 17–20 and Lys117; that span reads RELK. Residues 431-433 and Glu484 contribute to the L-homocysteine site; that span reads IGS. L-methionine is bound by residues 431-433 and Glu484; that span reads IGS. 5-methyltetrahydropteroyltri-L-glutamate is bound by residues 515 to 516 and Trp561; that span reads RC. Residue Asp599 participates in L-homocysteine binding. Position 599 (Asp599) interacts with L-methionine. Residue Glu605 participates in 5-methyltetrahydropteroyltri-L-glutamate binding. The Zn(2+) site is built by His641, Cys643, and Glu665. Residue His694 is the Proton donor of the active site. Position 726 (Cys726) interacts with Zn(2+).

Belongs to the vitamin-B12 independent methionine synthase family. Zn(2+) is required as a cofactor.

It catalyses the reaction 5-methyltetrahydropteroyltri-L-glutamate + L-homocysteine = tetrahydropteroyltri-L-glutamate + L-methionine. The protein operates within amino-acid biosynthesis; L-methionine biosynthesis via de novo pathway; L-methionine from L-homocysteine (MetE route): step 1/1. Catalyzes the transfer of a methyl group from 5-methyltetrahydrofolate to homocysteine resulting in methionine formation. The chain is 5-methyltetrahydropteroyltriglutamate--homocysteine methyltransferase from Escherichia coli O157:H7 (strain EC4115 / EHEC).